Here is a 92-residue protein sequence, read N- to C-terminus: Small ribosomal subunit protein uS19 (92 aa).

This sequence belongs to the universal ribosomal protein uS19 family.

Its function is as follows. Protein S19 forms a complex with S13 that binds strongly to the 16S ribosomal RNA. In Corynebacterium kroppenstedtii (strain DSM 44385 / JCM 11950 / CIP 105744 / CCUG 35717), this protein is Small ribosomal subunit protein uS19.